Reading from the N-terminus, the 1189-residue chain is Phosphatidylinositol 3,4,5-trisphosphate 5-phosphatase 1 (1189 aa).

The region spanning Trp-5–Val-101 is the SH2 domain. Residues Leu-103–Val-117 are compositionally biased toward acidic residues. The tract at residues Leu-103–Pro-132 is disordered. An SH3-binding 1 motif is present at residues Pro-124 to Arg-129. A Phosphoserine modification is found at Ser-243. A disordered region spans residues Thr-870–Ser-906. Positions Asn-912 to Tyr-915 match the NPXY motif 1 motif. A Phosphotyrosine modification is found at Tyr-915. The interval Gly-922–Gln-1189 is disordered. Over residues Gln-931 to Ser-943 the composition is skewed to polar residues. Ser-934 is subject to Phosphoserine. Residue Tyr-944 is modified to Phosphotyrosine. The residue at position 960 (Ser-960) is a Phosphoserine. Residues Pro-961–Ser-971 show a composition bias toward pro residues. Residue Thr-963 is modified to Phosphothreonine. Positions Pro-969–Lys-974 match the SH3-binding 2 motif. Ser-971 is modified (phosphoserine). The tract at residues Met-1016–Lys-1030 is interaction with DAB2. Residues Asn-1019 to Tyr-1022 carry the NPXY motif 2 motif. Tyr-1022 carries the phosphotyrosine modification. Basic and acidic residues predominate over residues Pro-1033–Pro-1047. An SH3-binding 3 motif is present at residues Pro-1040–Pro-1051. Positions Pro-1134–Val-1145 are enriched in pro residues. Residues Lys-1157–Glu-1177 show a composition bias toward basic and acidic residues.

It belongs to the inositol 1,4,5-trisphosphate 5-phosphatase family. Interacts with tyrosine phosphorylated form of SHC1. Interacts with tyrosine phosphorylated form of DOK1. Interacts with tyrosine phosphorylated form of DOK3. Interacts with tyrosine phosphorylated form of SLAMF1/CD150. Interacts with PTPN11 in response to IL-3. Interacts with receptor EPOR. Interacts with receptors MS4A2/FCER1B and FCER1G. Interacts with receptors FCGR2B and FCGR3. Interacts with receptor FCGR2A, leading to regulate gene expression during the phagocytic process. Interacts with GRB2. Interacts with PLCG1. Interacts with tyrosine kinases SRC and TEC. Interacts with c-Met/MET. Interacts with MILR1 (tyrosine-phosphorylated). Can weakly interact (via NPXY motif 2) with DAB2 (via PID domain); the interaction is impaired by tyrosine phosphorylation of the NPXY motif. Interacts with FCRL3 and FCRL6 (tyrosine phosphorylated form). Interacts (via SH2 domain) with tyrosine phosphorylated KLRC1 (via ITIM). Interacts with MPL/TPOR. Tyrosine phosphorylated by the members of the SRC family after exposure to a diverse array of extracellular stimuli such as cytokines, growth factors, antibodies, chemokines, integrin ligands and hypertonic and oxidative stress. Phosphorylated upon IgG receptor FCGR2B-binding. Specifically expressed in immune and hematopoietic cells. Expressed in bone marrow and blood cells. Levels vary considerably within this compartment. Present in at least 74% of immature CD34+ cells, whereas within the more mature population of CD33+ cells, it is present in only 10% of cells. Present in the majority of T-cells, while it is present in a minority of B-cells (at protein level).

It is found in the cytoplasm. It localises to the cell membrane. The protein localises to the membrane raft. Its subcellular location is the cytoskeleton. The protein resides in the membrane. It carries out the reaction a 1,2-diacyl-sn-glycero-3-phospho-(1D-myo-inositol-3,4,5-trisphosphate) + H2O = a 1,2-diacyl-sn-glycero-3-phospho-(1D-myo-inositol-3,4-bisphosphate) + phosphate. The catalysed reaction is 1D-myo-inositol 1,3,4,5-tetrakisphosphate + H2O = 1D-myo-inositol 1,3,4-trisphosphate + phosphate. It catalyses the reaction a 1,2-diacyl-sn-glycero-3-phospho-(1D-myo-inositol-4,5-bisphosphate) + H2O = a 1,2-diacyl-sn-glycero-3-phospho-(1D-myo-inositol 4-phosphate) + phosphate. Its activity is regulated as follows. Activated upon translocation to the sites of synthesis of PtdIns(3,4,5)P3 in the membrane. Phosphatidylinositol (PtdIns) phosphatase that specifically hydrolyzes the 5-phosphate of phosphatidylinositol-3,4,5-trisphosphate (PtdIns(3,4,5)P3) to produce PtdIns(3,4)P2, thereby negatively regulating the PI3K (phosphoinositide 3-kinase) pathways. Able also to hydrolyzes the 5-phosphate of phosphatidylinositol-4,5-bisphosphate (PtdIns(4,5)P3) and inositol 1,3,4,5-tetrakisphosphate. Acts as a negative regulator of B-cell antigen receptor signaling. Mediates signaling from the FC-gamma-RIIB receptor (FCGR2B), playing a central role in terminating signal transduction from activating immune/hematopoietic cell receptor systems. Acts as a negative regulator of myeloid cell proliferation/survival and chemotaxis, mast cell degranulation, immune cells homeostasis, integrin alpha-IIb/beta-3 signaling in platelets and JNK signaling in B-cells. Regulates proliferation of osteoclast precursors, macrophage programming, phagocytosis and activation and is required for endotoxin tolerance. Involved in the control of cell-cell junctions, CD32a signaling in neutrophils and modulation of EGF-induced phospholipase C activity. Key regulator of neutrophil migration, by governing the formation of the leading edge and polarization required for chemotaxis. Modulates FCGR3/CD16-mediated cytotoxicity in NK cells. Mediates the activin/TGF-beta-induced apoptosis through its Smad-dependent expression. The chain is Phosphatidylinositol 3,4,5-trisphosphate 5-phosphatase 1 (INPP5D) from Homo sapiens (Human).